Consider the following 964-residue polypeptide: Translation initiation factor IF-2 (964 aa).

The segment covering 105–119 (AALAESEASEAAPVV) has biased composition (low complexity). 2 disordered regions span residues 105 to 133 (AALA…EHRR) and 146 to 378 (KARQ…PTEP). Basic and acidic residues-rich tracts occupy residues 123–133 (EVARREEEHRR), 146–183 (KARQ…KAEE), 197–253 (EAPR…RAIR), and 266–278 (PAER…KKAE). The segment covering 288 to 302 (KPAGEARPAAAKKPA) has biased composition (low complexity). The segment covering 303–313 (APAPAAAPAPG) has biased composition (pro residues). Residues 464–633 (TRPPVVTVMG…LLQAEVLELK (170 aa)) form the tr-type G domain. The segment at 473 to 480 (GHVDHGKT) is G1. 473–480 (GHVDHGKT) is a GTP binding site. The interval 498–502 (GITQH) is G2. The segment at 519–522 (DTPG) is G3. Residues 519–523 (DTPGH) and 573–576 (TKVD) contribute to the GTP site. The G4 stretch occupies residues 573-576 (TKVD). The G5 stretch occupies residues 609–611 (SAK).

The protein belongs to the TRAFAC class translation factor GTPase superfamily. Classic translation factor GTPase family. IF-2 subfamily.

It is found in the cytoplasm. One of the essential components for the initiation of protein synthesis. Protects formylmethionyl-tRNA from spontaneous hydrolysis and promotes its binding to the 30S ribosomal subunits. Also involved in the hydrolysis of GTP during the formation of the 70S ribosomal complex. The sequence is that of Translation initiation factor IF-2 from Ralstonia pickettii (strain 12J).